The sequence spans 419 residues: Inward rectifier potassium channel 16 (419 aa).

Over 1-67 (MSYYGSSYRI…MVDIFTTLVD (67 aa)) the chain is Cytoplasmic. Residues 68 to 94 (TKWRHMFVVFSLSYILSWLIFGSIFWL) form a helical membrane-spanning segment. At 95-117 (IALHHGDLLSDPDITPCVDNVHS) the chain is on the extracellular side. An intramembrane region (helical; Pore-forming) is located at residues 118–134 (FTAAFLFSLETQTTIGY). Positions 131-136 (TIGYGY) match the Selectivity filter motif. Topologically, residues 135-143 (GYRCVTEEC) are extracellular. A helical membrane pass occupies residues 144–171 (SVAVLTVILQSILSCIINTFIIGAALAK). The Cytoplasmic portion of the chain corresponds to 172–419 (MATARKRAQT…LNRISMESQM (248 aa)). Residues Ser358, Ser374, and Ser376 each carry the phosphoserine modification.

The protein belongs to the inward rectifier-type potassium channel (TC 1.A.2.1) family. KCNJ16 subfamily. As to quaternary structure, it forms heteromeric channels with Kir4.1/KCNJ10; this interaction is required for KCNJ16 localization to the basolateral membrane in kidney cells. As a heteromer with KCNJ10, may interact with MAGI1; this interaction may facilitate KCNJ10/KCNJ16 potassium channel expression at the basolateral membrane in kidney cells. May form heteromers with Kir2.1/KCNJ2. Can form heteromeric channels with Kir4.2/KCNJ15. Expressed in the brain, testis, liver, spleen, kidney, submaxillary gland and adrenals. In the kidney, expressed in the epithelial cells of both proximal and distal convoluted tubules, in the endothelial cells surrounding glomerular capillaries and in the flattened parietal layer of Bowman's capsule.

It localises to the membrane. The protein resides in the basolateral cell membrane. The catalysed reaction is K(+)(in) = K(+)(out). Its activity is regulated as follows. Channel activity is strongly regulated by variations of cytosolic pH; channels are activated by alkaline and inhibited by acidic pH values. Activated by phosphatidylinositol 4,5 biphosphate (PtdIns(4,5)P2). Inward rectifier potassium channels are characterized by a greater tendency to allow potassium to flow into the cell rather than out of it. Their voltage dependence is regulated by the concentration of extracellular potassium; as external potassium is raised, the voltage range of the channel opening shifts to more positive voltages. The inward rectification is mainly due to the blockage of outward current by internal magnesium. KCNJ16 may be involved in the regulation of fluid and pH balance. In the kidney, together with KCNJ10, mediates basolateral K(+) recycling in distal tubules; this process is critical for Na(+) reabsorption at the tubules. This Rattus norvegicus (Rat) protein is Inward rectifier potassium channel 16 (Kcnj16).